A 366-amino-acid polypeptide reads, in one-letter code: Alanine racemase (366 aa).

Residue Lys40 is the Proton acceptor; specific for D-alanine of the active site. Lys40 carries the post-translational modification N6-(pyridoxal phosphate)lysine. Arg136 contributes to the substrate binding site. Tyr263 (proton acceptor; specific for L-alanine) is an active-site residue. Met310 contacts substrate.

This sequence belongs to the alanine racemase family. Pyridoxal 5'-phosphate serves as cofactor.

The catalysed reaction is L-alanine = D-alanine. It functions in the pathway amino-acid biosynthesis; D-alanine biosynthesis; D-alanine from L-alanine: step 1/1. In terms of biological role, catalyzes the interconversion of L-alanine and D-alanine. May also act on other amino acids. The polypeptide is Alanine racemase (alr) (Streptococcus agalactiae serotype Ia (strain ATCC 27591 / A909 / CDC SS700)).